A 374-amino-acid polypeptide reads, in one-letter code: 4-hydroxy-3-methylbut-2-en-1-yl diphosphate synthase (flavodoxin) (374 aa).

The [4Fe-4S] cluster site is built by C268, C271, C303, and E310.

It belongs to the IspG family. It depends on [4Fe-4S] cluster as a cofactor.

The enzyme catalyses (2E)-4-hydroxy-3-methylbut-2-enyl diphosphate + oxidized [flavodoxin] + H2O + 2 H(+) = 2-C-methyl-D-erythritol 2,4-cyclic diphosphate + reduced [flavodoxin]. The protein operates within isoprenoid biosynthesis; isopentenyl diphosphate biosynthesis via DXP pathway; isopentenyl diphosphate from 1-deoxy-D-xylulose 5-phosphate: step 5/6. Its function is as follows. Converts 2C-methyl-D-erythritol 2,4-cyclodiphosphate (ME-2,4cPP) into 1-hydroxy-2-methyl-2-(E)-butenyl 4-diphosphate. The chain is 4-hydroxy-3-methylbut-2-en-1-yl diphosphate synthase (flavodoxin) from Geobacillus thermodenitrificans (strain NG80-2).